The chain runs to 220 residues: Ribose-5-phosphate isomerase A (220 aa).

Substrate is bound by residues 28–31, 81–84, and 94–97; these read TGST, DGAD, and KGGG. Glutamate 103 functions as the Proton acceptor in the catalytic mechanism. Lysine 121 provides a ligand contact to substrate.

The protein belongs to the ribose 5-phosphate isomerase family. Homodimer.

It carries out the reaction aldehydo-D-ribose 5-phosphate = D-ribulose 5-phosphate. Its pathway is carbohydrate degradation; pentose phosphate pathway; D-ribose 5-phosphate from D-ribulose 5-phosphate (non-oxidative stage): step 1/1. Functionally, catalyzes the reversible conversion of ribose-5-phosphate to ribulose 5-phosphate. This is Ribose-5-phosphate isomerase A from Aromatoleum aromaticum (strain DSM 19018 / LMG 30748 / EbN1) (Azoarcus sp. (strain EbN1)).